We begin with the raw amino-acid sequence, 274 residues long: 2,3,4,5-tetrahydropyridine-2,6-dicarboxylate N-succinyltransferase (274 aa).

Substrate-binding residues include Arg-106 and Asp-143.

Belongs to the transferase hexapeptide repeat family. As to quaternary structure, homotrimer.

It localises to the cytoplasm. It catalyses the reaction (S)-2,3,4,5-tetrahydrodipicolinate + succinyl-CoA + H2O = (S)-2-succinylamino-6-oxoheptanedioate + CoA. It participates in amino-acid biosynthesis; L-lysine biosynthesis via DAP pathway; LL-2,6-diaminopimelate from (S)-tetrahydrodipicolinate (succinylase route): step 1/3. The chain is 2,3,4,5-tetrahydropyridine-2,6-dicarboxylate N-succinyltransferase from Rickettsia conorii (strain ATCC VR-613 / Malish 7).